We begin with the raw amino-acid sequence, 278 residues long: Ribosomal RNA small subunit methyltransferase A (278 aa).

Positions 28, 30, 55, 77, 103, and 122 each coordinate S-adenosyl-L-methionine.

Belongs to the class I-like SAM-binding methyltransferase superfamily. rRNA adenine N(6)-methyltransferase family. RsmA subfamily.

The protein localises to the cytoplasm. It catalyses the reaction adenosine(1518)/adenosine(1519) in 16S rRNA + 4 S-adenosyl-L-methionine = N(6)-dimethyladenosine(1518)/N(6)-dimethyladenosine(1519) in 16S rRNA + 4 S-adenosyl-L-homocysteine + 4 H(+). Its function is as follows. Specifically dimethylates two adjacent adenosines (A1518 and A1519) in the loop of a conserved hairpin near the 3'-end of 16S rRNA in the 30S particle. May play a critical role in biogenesis of 30S subunits. The sequence is that of Ribosomal RNA small subunit methyltransferase A from Cereibacter sphaeroides (strain ATCC 17023 / DSM 158 / JCM 6121 / CCUG 31486 / LMG 2827 / NBRC 12203 / NCIMB 8253 / ATH 2.4.1.) (Rhodobacter sphaeroides).